An 87-amino-acid chain; its full sequence is Small ribosomal subunit protein uS17 (87 aa).

Belongs to the universal ribosomal protein uS17 family. As to quaternary structure, part of the 30S ribosomal subunit.

In terms of biological role, one of the primary rRNA binding proteins, it binds specifically to the 5'-end of 16S ribosomal RNA. In Thiobacillus denitrificans (strain ATCC 25259 / T1), this protein is Small ribosomal subunit protein uS17.